The sequence spans 275 residues: 4-hydroxy-tetrahydrodipicolinate reductase (275 aa).

Residues Gly13–Met18, Gly108–Thr110, and Val134–Phe137 each bind NAD(+). Catalysis depends on His164, which acts as the Proton donor/acceptor. His165 lines the (S)-2,3,4,5-tetrahydrodipicolinate pocket. Lys168 acts as the Proton donor in catalysis. Gly174–Thr175 lines the (S)-2,3,4,5-tetrahydrodipicolinate pocket.

Belongs to the DapB family.

It is found in the cytoplasm. It carries out the reaction (S)-2,3,4,5-tetrahydrodipicolinate + NAD(+) + H2O = (2S,4S)-4-hydroxy-2,3,4,5-tetrahydrodipicolinate + NADH + H(+). The catalysed reaction is (S)-2,3,4,5-tetrahydrodipicolinate + NADP(+) + H2O = (2S,4S)-4-hydroxy-2,3,4,5-tetrahydrodipicolinate + NADPH + H(+). The protein operates within amino-acid biosynthesis; L-lysine biosynthesis via DAP pathway; (S)-tetrahydrodipicolinate from L-aspartate: step 4/4. Catalyzes the conversion of 4-hydroxy-tetrahydrodipicolinate (HTPA) to tetrahydrodipicolinate. The protein is 4-hydroxy-tetrahydrodipicolinate reductase of Gloeothece citriformis (strain PCC 7424) (Cyanothece sp. (strain PCC 7424)).